A 165-amino-acid polypeptide reads, in one-letter code: Crossover junction endodeoxyribonuclease RuvC (165 aa).

Residues Asp7, Glu67, and Asp140 contribute to the active site. The Mg(2+) site is built by Asp7, Glu67, and Asp140.

This sequence belongs to the RuvC family. Homodimer which binds Holliday junction (HJ) DNA. The HJ becomes 2-fold symmetrical on binding to RuvC with unstacked arms; it has a different conformation from HJ DNA in complex with RuvA. In the full resolvosome a probable DNA-RuvA(4)-RuvB(12)-RuvC(2) complex forms which resolves the HJ. Requires Mg(2+) as cofactor.

The protein resides in the cytoplasm. The enzyme catalyses Endonucleolytic cleavage at a junction such as a reciprocal single-stranded crossover between two homologous DNA duplexes (Holliday junction).. The RuvA-RuvB-RuvC complex processes Holliday junction (HJ) DNA during genetic recombination and DNA repair. Endonuclease that resolves HJ intermediates. Cleaves cruciform DNA by making single-stranded nicks across the HJ at symmetrical positions within the homologous arms, yielding a 5'-phosphate and a 3'-hydroxyl group; requires a central core of homology in the junction. The consensus cleavage sequence is 5'-(A/T)TT(C/G)-3'. Cleavage occurs on the 3'-side of the TT dinucleotide at the point of strand exchange. HJ branch migration catalyzed by RuvA-RuvB allows RuvC to scan DNA until it finds its consensus sequence, where it cleaves and resolves the cruciform DNA. This chain is Crossover junction endodeoxyribonuclease RuvC, found in Desulfitobacterium hafniense (strain DSM 10664 / DCB-2).